Here is a 239-residue protein sequence, read N- to C-terminus: Zwei Ig domain protein zig-7 (239 aa).

The first 21 residues, 1–21, serve as a signal peptide directing secretion; it reads MKLINCISIALLCTLVDFSSA. Residue N43 is glycosylated (N-linked (GlcNAc...) asparagine). The region spanning 145-211 is the Ig-like C2-type domain; that stretch reads PHVIGAERRG…TEDHIGKYRC (67 aa). Cysteines 164 and 211 form a disulfide.

As to expression, expressed in body wall muscles.

Its subcellular location is the secreted. Functionally, probably not involved in maintaining the position of ASI and ASH head neuron cell bodies and ventral nerve cord axons of PVQ, PVP, RMEV, AVK and HSN neurons. This Caenorhabditis elegans protein is Zwei Ig domain protein zig-7.